The following is a 229-amino-acid chain: 2-C-methyl-D-erythritol 4-phosphate cytidylyltransferase (229 aa).

Belongs to the IspD/TarI cytidylyltransferase family. IspD subfamily.

It carries out the reaction 2-C-methyl-D-erythritol 4-phosphate + CTP + H(+) = 4-CDP-2-C-methyl-D-erythritol + diphosphate. Its pathway is isoprenoid biosynthesis; isopentenyl diphosphate biosynthesis via DXP pathway; isopentenyl diphosphate from 1-deoxy-D-xylulose 5-phosphate: step 2/6. In terms of biological role, catalyzes the formation of 4-diphosphocytidyl-2-C-methyl-D-erythritol from CTP and 2-C-methyl-D-erythritol 4-phosphate (MEP). This Clostridium botulinum (strain 657 / Type Ba4) protein is 2-C-methyl-D-erythritol 4-phosphate cytidylyltransferase.